The chain runs to 124 residues: UPF0231 protein Shewmr7_3366 (124 aa).

It belongs to the UPF0231 family.

This Shewanella sp. (strain MR-7) protein is UPF0231 protein Shewmr7_3366.